Consider the following 398-residue polypeptide: Phosphoglycerate kinase (398 aa).

Residues 21 to 23 (DFN), R36, 59 to 62 (HLGR), R119, and R157 each bind substrate. ATP contacts are provided by residues K208, G296, E327, and 354 to 357 (GGDS).

The protein belongs to the phosphoglycerate kinase family. As to quaternary structure, monomer.

The protein localises to the cytoplasm. The catalysed reaction is (2R)-3-phosphoglycerate + ATP = (2R)-3-phospho-glyceroyl phosphate + ADP. It functions in the pathway carbohydrate degradation; glycolysis; pyruvate from D-glyceraldehyde 3-phosphate: step 2/5. The protein is Phosphoglycerate kinase of Streptococcus pyogenes serotype M5 (strain Manfredo).